Reading from the N-terminus, the 366-residue chain is Tyrosine--tRNA ligase (366 aa).

5 residues coordinate L-tyrosine: Y41, Y167, Q171, D174, and Q189. The 'KMSKS' region motif lies at K241–S245. An ATP-binding site is contributed by K244.

The protein belongs to the class-I aminoacyl-tRNA synthetase family. TyrS type 4 subfamily. In terms of assembly, homodimer.

It localises to the cytoplasm. It catalyses the reaction tRNA(Tyr) + L-tyrosine + ATP = L-tyrosyl-tRNA(Tyr) + AMP + diphosphate + H(+). Catalyzes the attachment of tyrosine to tRNA(Tyr) in a two-step reaction: tyrosine is first activated by ATP to form Tyr-AMP and then transferred to the acceptor end of tRNA(Tyr). This chain is Tyrosine--tRNA ligase, found in Saccharolobus solfataricus (strain ATCC 35092 / DSM 1617 / JCM 11322 / P2) (Sulfolobus solfataricus).